We begin with the raw amino-acid sequence, 234 residues long: Adenosine 5'-phosphosulfate reductase (234 aa).

Positions 120, 121, 203, and 206 each coordinate [4Fe-4S] cluster. Residue Cys229 is the Nucleophile; cysteine thiosulfonate intermediate of the active site.

This sequence belongs to the PAPS reductase family. CysH subfamily. [4Fe-4S] cluster is required as a cofactor.

Its subcellular location is the cytoplasm. The enzyme catalyses [thioredoxin]-disulfide + sulfite + AMP + 2 H(+) = adenosine 5'-phosphosulfate + [thioredoxin]-dithiol. The protein operates within sulfur metabolism; hydrogen sulfide biosynthesis; sulfite from sulfate. Its function is as follows. Catalyzes the formation of sulfite from adenosine 5'-phosphosulfate (APS) using thioredoxin as an electron donor. The chain is Adenosine 5'-phosphosulfate reductase from Bacillus cereus (strain 03BB102).